Here is a 183-residue protein sequence, read N- to C-terminus: Threonylcarbamoyl-AMP synthase (183 aa).

The YrdC-like domain occupies 1-183 (MNREQIADAL…LRTNQLFRQG (183 aa)).

Belongs to the SUA5 family. TsaC subfamily.

Its subcellular location is the cytoplasm. The enzyme catalyses L-threonine + hydrogencarbonate + ATP = L-threonylcarbamoyladenylate + diphosphate + H2O. Its function is as follows. Required for the formation of a threonylcarbamoyl group on adenosine at position 37 (t(6)A37) in tRNAs that read codons beginning with adenine. Catalyzes the conversion of L-threonine, HCO(3)(-)/CO(2) and ATP to give threonylcarbamoyl-AMP (TC-AMP) as the acyladenylate intermediate, with the release of diphosphate. The polypeptide is Threonylcarbamoyl-AMP synthase (Haemophilus influenzae (strain ATCC 51907 / DSM 11121 / KW20 / Rd)).